We begin with the raw amino-acid sequence, 69 residues long: Conotoxin Eb6.9 (69 aa).

A signal peptide spans 1 to 17; the sequence is VLIIAVLFLTACQLTTA. A propeptide spanning residues 18-41 is cleaved from the precursor; it reads ETYSRGRQKHRARRSTDKNSKWTR. 3 disulfide bridges follow: Cys43/Cys57, Cys50/Cys61, and Cys56/Cys68.

It belongs to the conotoxin O1 superfamily. In terms of tissue distribution, expressed by the venom duct.

Its subcellular location is the secreted. The protein is Conotoxin Eb6.9 (E1) of Conus ebraeus (Hebrew cone).